The following is a 344-amino-acid chain: Methionine aminopeptidase 1C, chloroplastic/mitochondrial (344 aa).

His172 serves as a coordination point for substrate. A divalent metal cation is bound by residues Asp189, Asp200, and His262. His269 is a binding site for substrate. Positions 296 and 327 each coordinate a divalent metal cation.

The protein belongs to the peptidase M24A family. Methionine aminopeptidase type 1 subfamily. Co(2+) is required as a cofactor. Zn(2+) serves as cofactor. It depends on Mn(2+) as a cofactor. Requires Fe(2+) as cofactor. As to expression, ubiquitous.

It localises to the plastid. Its subcellular location is the chloroplast. It is found in the mitochondrion. It catalyses the reaction Release of N-terminal amino acids, preferentially methionine, from peptides and arylamides.. In terms of biological role, removes the N-terminal methionine from nascent proteins. The N-terminal methionine is often cleaved when the second residue in the primary sequence is small and uncharged (Met-Ala-, Cys, Gly, Pro, Ser, Thr, or Val). The chain is Methionine aminopeptidase 1C, chloroplastic/mitochondrial (MAP1C) from Arabidopsis thaliana (Mouse-ear cress).